Reading from the N-terminus, the 202-residue chain is MKKQLLIGSVLLVASSQVWADAASSLKQKLADVSLFSAKFAQTVYDSKGKELQKAGGDLLVQRPNRFNWHTTSPDESLIVADGKDVWVYDPFVEQVTALKLKDAVLNTPFILIAGNDDKFWKHYDVTQEGNVYTVTSRNKDELIASFRVTFDRQNNISRFDVKEAQGQWSEFTLSSFNRKPVLKGNEFVFKIPKGVELDDQR.

An N-terminal signal peptide occupies residues 1–20; sequence MKKQLLIGSVLLVASSQVWA.

This sequence belongs to the LolA family. As to quaternary structure, monomer.

The protein resides in the periplasm. Functionally, participates in the translocation of lipoproteins from the inner membrane to the outer membrane. Only forms a complex with a lipoprotein if the residue after the N-terminal Cys is not an aspartate (The Asp acts as a targeting signal to indicate that the lipoprotein should stay in the inner membrane). This chain is Outer-membrane lipoprotein carrier protein, found in Aeromonas salmonicida (strain A449).